We begin with the raw amino-acid sequence, 502 residues long: Lysine--tRNA ligase (502 aa).

Residues Glu-413 and Glu-420 each coordinate Mg(2+).

This sequence belongs to the class-II aminoacyl-tRNA synthetase family. As to quaternary structure, homodimer. Mg(2+) is required as a cofactor.

The protein resides in the cytoplasm. The enzyme catalyses tRNA(Lys) + L-lysine + ATP = L-lysyl-tRNA(Lys) + AMP + diphosphate. This is Lysine--tRNA ligase from Haemophilus influenzae (strain PittGG).